Reading from the N-terminus, the 149-residue chain is Calmodulin (149 aa).

A2 is modified (N-acetylalanine). EF-hand domains follow at residues 8–43, 44–79, 81–116, and 117–149; these read EQIAEFKEAFSLFDKDGDGTITTKELGTVMRSLGQN, PTEAELQDMINEVDADGNGTIDFPEFLTMMARKMKD, DSEEEIREAFRVFDKDGNGFISAAELRHVMTNLGEK, and LTDEEVDEMIREADVDGDGQVNYEEFVNMMTNK. Ca(2+) is bound by residues D21, D23, D25, T27, E32, D57, D59, N61, T63, E68, D94, D96, N98, and E105. At K116 the chain carries N6,N6,N6-trimethyllysine. Ca(2+) is bound by residues D130, D132, D134, Q136, and E141.

The protein belongs to the calmodulin family.

Its function is as follows. Calmodulin mediates the control of a large number of enzymes, ion channels and other proteins by Ca(2+). Among the enzymes to be stimulated by the calmodulin-Ca(2+) complex are a number of protein kinases and phosphatases. The chain is Calmodulin from Ciona intestinalis (Transparent sea squirt).